A 150-amino-acid chain; its full sequence is uncharacterized protein (150 aa).

Positions M1–A23 are cleaved as a signal peptide.

This sequence belongs to the asfivirus EP152R family.

Its subcellular location is the virion. This is an uncharacterized protein from African swine fever virus (isolate Warthog/Namibia/Wart80/1980) (ASFV).